Consider the following 67-residue polypeptide: Conotoxin VnMMSK-03 (67 aa).

The signal sequence occupies residues 1-20 (MMSKLGVVLTICLLPFPLTA). A propeptide spanning residues 21 to 50 (LPMDGDQPADLPALRTQDFEPERSPWFDPV) is cleaved from the precursor. 3 disulfide bridges follow: Cys-53–Cys-65, Cys-54–Cys-61, and Cys-58–Cys-64. Pro-63 carries the post-translational modification 4-hydroxyproline.

This sequence belongs to the conotoxin M superfamily. As to expression, expressed by the venom duct.

Its subcellular location is the secreted. This is Conotoxin VnMMSK-03 from Conus ventricosus (Mediterranean cone).